Consider the following 81-residue polypeptide: DNA-directed RNA polymerase subunit Rpo6 (81 aa).

Belongs to the archaeal Rpo6/eukaryotic RPB6 RNA polymerase subunit family. Part of the RNA polymerase complex.

The protein resides in the cytoplasm. It carries out the reaction RNA(n) + a ribonucleoside 5'-triphosphate = RNA(n+1) + diphosphate. In terms of biological role, DNA-dependent RNA polymerase (RNAP) catalyzes the transcription of DNA into RNA using the four ribonucleoside triphosphates as substrates. This Thermofilum pendens (strain DSM 2475 / Hrk 5) protein is DNA-directed RNA polymerase subunit Rpo6.